A 425-amino-acid chain; its full sequence is tRNA(Ile)-lysidine synthase (425 aa).

Residue 27–32 (SGGLDS) participates in ATP binding.

It belongs to the tRNA(Ile)-lysidine synthase family.

It is found in the cytoplasm. It carries out the reaction cytidine(34) in tRNA(Ile2) + L-lysine + ATP = lysidine(34) in tRNA(Ile2) + AMP + diphosphate + H(+). In terms of biological role, ligates lysine onto the cytidine present at position 34 of the AUA codon-specific tRNA(Ile) that contains the anticodon CAU, in an ATP-dependent manner. Cytidine is converted to lysidine, thus changing the amino acid specificity of the tRNA from methionine to isoleucine. This Streptococcus pneumoniae (strain P1031) protein is tRNA(Ile)-lysidine synthase.